Here is a 204-residue protein sequence, read N- to C-terminus: Molybdenum cofactor guanylyltransferase (204 aa).

Residues 10-12 (LAG), Lys23, Asn51, Asp69, and Asp99 each bind GTP. Asp99 lines the Mg(2+) pocket.

This sequence belongs to the MobA family. As to quaternary structure, monomer. Mg(2+) serves as cofactor.

It is found in the cytoplasm. The catalysed reaction is Mo-molybdopterin + GTP + H(+) = Mo-molybdopterin guanine dinucleotide + diphosphate. In terms of biological role, transfers a GMP moiety from GTP to Mo-molybdopterin (Mo-MPT) cofactor (Moco or molybdenum cofactor) to form Mo-molybdopterin guanine dinucleotide (Mo-MGD) cofactor. This Shewanella piezotolerans (strain WP3 / JCM 13877) protein is Molybdenum cofactor guanylyltransferase.